Here is a 304-residue protein sequence, read N- to C-terminus: Secreted mono- and diacylglycerol lipase MDL3 (304 aa).

Residues 1 to 19 form the signal peptide; it reads MIVGPVISLLLSYFVLVSG. Cys55 and Cys297 form a disulfide bridge. Asn161 carries an N-linked (GlcNAc...) asparagine glycan. Ser171 (nucleophile) is an active-site residue. Residues Asp228 and His281 contribute to the active site.

It belongs to the AB hydrolase superfamily. Lipase family. Class 3 subfamily.

The protein resides in the secreted. It localises to the cell wall. It carries out the reaction a monoacylglycerol + H2O = glycerol + a fatty acid + H(+). The enzyme catalyses a diacylglycerol + H2O = a monoacylglycerol + a fatty acid + H(+). Secreted lipase involved in Dandruff and seborrheic dermatitis (D/SD) probably via lipase-mediated breakdown of sebaceous lipids and release of irritating free fatty acids. Shows activity against monoglyceride and diglyceride substrates, but not triglyceride substrates and does not exhibit regio-selective production of diacylglycerols. Hydrolyzes distearin, dilinolein, dipalmitoylglycerol and dipalmitolein. Cleaves oleic acid from 1,2 isomers of diolein on both the 1 and the 2 position of the glycerol backbone, resulting mainly in free fatty acids but no monoolein is detected. Shows activity on monoolein and liberates mostly free fatty acids, but can also perform the reverse reaction and produce diolein. The protein is Secreted mono- and diacylglycerol lipase MDL3 of Malassezia globosa (strain ATCC MYA-4612 / CBS 7966) (Dandruff-associated fungus).